A 561-amino-acid chain; its full sequence is Putative transport protein YbjL (561 aa).

5 helical membrane passes run 8–28, 32–52, 66–86, 94–114, and 158–178; these read LLNG…LCLG, LGSV…LLGQ, FMLF…SIFF, MLAL…GKLF, and NLSL…IVGA. RCK C-terminal domains lie at 200 to 288 and 292 to 373; these read RGLD…SFRN and VFDR…RIGF. A run of 5 helical transmembrane segments spans residues 383–403, 406–426, 447–467, 475–495, and 540–560; these read LLAF…TFQF, FSFG…LGFL, FGLM…INNG, MLIA…LFGA, and AIAN…WPGL.

Belongs to the AAE transporter (TC 2.A.81) family. YbjL subfamily.

The protein localises to the cell membrane. The polypeptide is Putative transport protein YbjL (Salmonella paratyphi C (strain RKS4594)).